A 741-amino-acid polypeptide reads, in one-letter code: Catalase-peroxidase (741 aa).

The N-terminal stretch at 1–23 (MLKKIVTALGMSGMLLASSNAIA) is a signal peptide. A cross-link (tryptophyl-tyrosyl-methioninium (Trp-Tyr) (with M-249)) is located at residues 102-223 (WHDAGTYRIY…YAATQMGLIY (122 aa)). Histidine 103 functions as the Proton acceptor in the catalytic mechanism. The tryptophyl-tyrosyl-methioninium (Tyr-Met) (with W-102) cross-link spans 223–249 (YVNPEGPDGKPDIKGAASEIRQAFRAM). Heme b is bound at residue histidine 264.

It belongs to the peroxidase family. Peroxidase/catalase subfamily. In terms of assembly, homodimer or homotetramer. It depends on heme b as a cofactor. Post-translationally, formation of the three residue Trp-Tyr-Met cross-link is important for the catalase, but not the peroxidase activity of the enzyme.

It carries out the reaction H2O2 + AH2 = A + 2 H2O. The enzyme catalyses 2 H2O2 = O2 + 2 H2O. Its function is as follows. Bifunctional enzyme with both catalase and broad-spectrum peroxidase activity. The sequence is that of Catalase-peroxidase from Francisella tularensis subsp. tularensis (strain WY96-3418).